Here is a 518-residue protein sequence, read N- to C-terminus: Alpha-ionylideneethane synthase abl3 (518 aa).

Disordered stretches follow at residues 294–355 (AAPG…SVFE) and 440–466 (KAPPPPSPRRAVPADGEADSAAGQRSK). Low complexity predominate over residues 299 to 339 (TSSDNSSDNRSSSISSTSSTGTDGSGAGDASSVHSSGVHSD).

This sequence belongs to the alpha-ionylideneethane synthase family.

The protein operates within hormone biosynthesis. Alpha-ionylideneethane synthase involved in the biosynthesis of abscisic acid (ABA), a phytohormone that acts antagonistically toward salicylic acid (SA), jasmonic acid (JA) and ethylene (ETH) signaling, to impede plant defense responses. During pathogen-host interaction, ABA plays a dual role in disease severity by increasing plant susceptibility and accelerating pathogenesis in the fungus itself. The first step of the pathway catalyzes the reaction from farnesyl diphosphate to alpha-ionylideneethane performed by the alpha-ionylideneethane synthase ABA3 via a three-step reaction mechanism involving 2 neutral intermediates, beta-farnesene and allofarnesene. The cytochrome P450 monooxygenase ABA1 might then be involved in the conversion of alpha-ionylideneethane to alpha-ionylideneacetic acid. Alpha-ionylideneacetic acid is further converted to abscisic acid in 2 steps involving the cytochrome P450 monooxygenase ABA2 and the short-chain dehydrogenase/reductase ABA4, via the intermediates 1'-deoxy-ABA or 1',4'-trans-diol-ABA, depending on the order of action of these 2 enzymes. ABA2 is responsible for the hydroxylation of carbon atom C-1' and ABA4 might be involved in the oxidation of the C-4' carbon atom. This chain is Alpha-ionylideneethane synthase abl3, found in Pyricularia oryzae (strain Y34) (Rice blast fungus).